A 207-amino-acid polypeptide reads, in one-letter code: Small ribosomal subunit protein uS4 (207 aa).

A compositionally biased stretch (basic and acidic residues) spans 31–40 (KCRLDNKPGQ). The disordered stretch occupies residues 31–56 (KCRLDNKPGQDGRTSGSRTSDYGNQL). Residues 42–53 (GRTSGSRTSDYG) show a composition bias toward polar residues. In terms of domain architecture, S4 RNA-binding spans 97-158 (SRLDNVVYRM…KAKKQARITE (62 aa)).

Belongs to the universal ribosomal protein uS4 family. Part of the 30S ribosomal subunit. Contacts protein S5. The interaction surface between S4 and S5 is involved in control of translational fidelity.

One of the primary rRNA binding proteins, it binds directly to 16S rRNA where it nucleates assembly of the body of the 30S subunit. Functionally, with S5 and S12 plays an important role in translational accuracy. In Polynucleobacter necessarius subsp. necessarius (strain STIR1), this protein is Small ribosomal subunit protein uS4.